The following is a 541-amino-acid chain: Eukaryotic translation initiation factor 3 subunit L (541 aa).

A PCI domain is found at 308–516; it reads TFSDILLYIQ…IHIADTKVSH (209 aa).

The protein belongs to the eIF-3 subunit L family. In terms of assembly, component of the eukaryotic translation initiation factor 3 (eIF-3) complex. The eIF-3 complex interacts with pix.

It localises to the cytoplasm. Functionally, component of the eukaryotic translation initiation factor 3 (eIF-3) complex, which is involved in protein synthesis of a specialized repertoire of mRNAs and, together with other initiation factors, stimulates binding of mRNA and methionyl-tRNAi to the 40S ribosome. The eIF-3 complex specifically targets and initiates translation of a subset of mRNAs involved in cell proliferation. In Drosophila persimilis (Fruit fly), this protein is Eukaryotic translation initiation factor 3 subunit L.